The sequence spans 159 residues: MNITIISVGKIKEKYLSGAIIEYSKRISRYSKLDIIEVADEKTPENPSDVEKSKLLEKEAERILKYLKKDSFVITLEILGKELTSESLAKKINDLSISGKSDITFIIGGSLGLSRNISEISDFKLSFSKMTFPHQLMRVILLEQIYRSFRIINGEPYHK.

Residues Leu-76, Gly-108, and Phe-127–Phe-132 each bind S-adenosyl-L-methionine.

It belongs to the RNA methyltransferase RlmH family.

Its subcellular location is the cytoplasm. The catalysed reaction is pseudouridine(1915) in 23S rRNA + S-adenosyl-L-methionine = N(3)-methylpseudouridine(1915) in 23S rRNA + S-adenosyl-L-homocysteine + H(+). Its function is as follows. Specifically methylates the pseudouridine at position 1915 (m3Psi1915) in 23S rRNA. The protein is Putative ribosomal RNA large subunit methyltransferase H of Methanococcus maripaludis (strain C6 / ATCC BAA-1332).